Consider the following 169-residue polypeptide: Der GTPase-activating protein YihI (169 aa).

2 disordered regions span residues 1–99 (MKPS…QAEL) and 146–169 (SYDD…LRGN). Residues 10-19 (SKGHAKARRK) show a composition bias toward basic residues. A compositionally biased stretch (basic and acidic residues) spans 20 to 30 (TREELDQEARD). Residues 31–40 (RKRQKKRRGH) show a composition bias toward basic residues. Residues 49–58 (GNTTSGSKGQ) show a composition bias toward polar residues. Positions 147-159 (YDDDEEEEEDEKQ) are enriched in acidic residues. Residues 160–169 (EDMMRLLRGN) show a composition bias toward basic and acidic residues.

It belongs to the YihI family. As to quaternary structure, interacts with Der.

Its function is as follows. A GTPase-activating protein (GAP) that modifies Der/EngA GTPase function. May play a role in ribosome biogenesis. The polypeptide is Der GTPase-activating protein YihI (Escherichia coli O81 (strain ED1a)).